Consider the following 425-residue polypeptide: Aromatic prenyl transferase ptmE (425 aa).

Residues Gly83–Ile84 and Glu92 contribute to the L-tryptophan site. Arg107, Lys198, Tyr200, Arg265, Lys267, Tyr269, Tyr345, Tyr410, and Tyr414 together coordinate substrate.

It belongs to the tryptophan dimethylallyltransferase family. As to quaternary structure, homodimer.

The protein operates within secondary metabolite biosynthesis. In terms of biological role, aromatic prenyl transferase; part of the gene cluster that mediates the biosynthesis of the indole diterpenes penitrems. The geranylgeranyl diphosphate (GGPP) synthase ptmG catalyzes the first step in penitrem biosynthesis via conversion of farnesyl pyrophosphate and isopentyl pyrophosphate into geranylgeranyl pyrophosphate (GGPP). Condensation of indole-3-glycerol phosphate with GGPP by the prenyl transferase ptmC then forms 3-geranylgeranylindole (3-GGI). Epoxidation by the FAD-dependent monooxygenase ptmM leads to a epoxidized-GGI that is substrate of the terpene cyclase ptmB for cyclization to yield paspaline. Paspaline is subsequently converted to 13-desoxypaxilline by the cytochrome P450 monooxygenase ptmP, the latter being then converted to paxilline by the cytochrome P450 monooxygenase ptmQ. Paxilline is converted to beta-paxitriol via C-10 ketoreduction by the short-chain dehydrogenase ptmH which can be monoprenylated at the C-20 by the indole diterpene prenyltransferase ptmD. A two-step elimination (acetylation and elimination) process performed by the O-acetyltransferase ptmV and ptmI leads to the production of the prenylated form of penijanthine. The FAD-linked oxidoreductase ptmO then converts the prenylated form of penijanthine into PC-M5 which is in turn transformed into PC-M4 by the aromatic dimethylallyltransferase ptmE. Five sequential oxidative transformations performed by the cytochrome P450 monooxygenases ptmK, ptmU, ptmL, ptmN and ptmJ yield the various penitrem compounds. PtmK, ptmU and ptmM are involved in the formation of the key bicyclic ring of penitrem C via the formation of the intermediates secopenitrem D and penitrem D. PtmL catalyzes the epoxidation of penitrem D and C to yield penitrem B and F, respectively. PtmJ catalyzes the last benzylic hydroxylation to convert penitrem B to prenitrem E and penitrem F to penitrem A. The protein is Aromatic prenyl transferase ptmE of Penicillium ochrochloron.